We begin with the raw amino-acid sequence, 95 residues long: Aspartyl/glutamyl-tRNA(Asn/Gln) amidotransferase subunit C (95 aa).

It belongs to the GatC family. Heterotrimer of A, B and C subunits.

It catalyses the reaction L-glutamyl-tRNA(Gln) + L-glutamine + ATP + H2O = L-glutaminyl-tRNA(Gln) + L-glutamate + ADP + phosphate + H(+). It carries out the reaction L-aspartyl-tRNA(Asn) + L-glutamine + ATP + H2O = L-asparaginyl-tRNA(Asn) + L-glutamate + ADP + phosphate + 2 H(+). Its function is as follows. Allows the formation of correctly charged Asn-tRNA(Asn) or Gln-tRNA(Gln) through the transamidation of misacylated Asp-tRNA(Asn) or Glu-tRNA(Gln) in organisms which lack either or both of asparaginyl-tRNA or glutaminyl-tRNA synthetases. The reaction takes place in the presence of glutamine and ATP through an activated phospho-Asp-tRNA(Asn) or phospho-Glu-tRNA(Gln). The protein is Aspartyl/glutamyl-tRNA(Asn/Gln) amidotransferase subunit C of Shouchella clausii (strain KSM-K16) (Alkalihalobacillus clausii).